Here is a 38-residue protein sequence, read N- to C-terminus: Phospholipase A2 2 (38 aa).

Ca(2+) is bound by residues Tyr28, Gly30, and Gly32.

Belongs to the phospholipase A2 family. Group I subfamily. The cofactor is Ca(2+). In terms of tissue distribution, expressed by the venom gland.

Its subcellular location is the secreted. It carries out the reaction a 1,2-diacyl-sn-glycero-3-phosphocholine + H2O = a 1-acyl-sn-glycero-3-phosphocholine + a fatty acid + H(+). Functionally, snake venom phospholipase A2 (PLA2) that inhibits neuromuscular transmission by blocking acetylcholine release from the nerve termini. PLA2 catalyzes the calcium-dependent hydrolysis of the 2-acyl groups in 3-sn-phosphoglycerides. In Calliophis bivirgatus (Blue Malaysian coral snake), this protein is Phospholipase A2 2.